The sequence spans 354 residues: Replication factor C subunit 3 (354 aa).

ATP is bound at residue 41–48 (GPSGSGKK).

Belongs to the activator 1 small subunits family. Heterotetramer of subunits RFC2, RFC3, RFC4 and RFC5 that can form a complex with RFC1.

It is found in the nucleus. Its function is as follows. May be involved in DNA replication and thus regulate cell proliferation. This chain is Replication factor C subunit 3 (RFC3), found in Arabidopsis thaliana (Mouse-ear cress).